A 171-amino-acid chain; its full sequence is Glutamyl-tRNA(Gln) amidotransferase subunit F, mitochondrial (171 aa).

Belongs to the GatF family. As to quaternary structure, subunit of the heterotrimeric GatFAB amidotransferase (AdT) complex, composed of A, B and F subunits.

It is found in the mitochondrion inner membrane. It catalyses the reaction L-glutamyl-tRNA(Gln) + L-glutamine + ATP + H2O = L-glutaminyl-tRNA(Gln) + L-glutamate + ADP + phosphate + H(+). Its function is as follows. Allows the formation of correctly charged Gln-tRNA(Gln) through the transamidation of misacylated Glu-tRNA(Gln) in the mitochondria. The reaction takes place in the presence of glutamine and ATP through an activated gamma-phospho-Glu-tRNA(Gln). Required for proper protein synthesis within the mitochondrion. This chain is Glutamyl-tRNA(Gln) amidotransferase subunit F, mitochondrial, found in Zygosaccharomyces rouxii (strain ATCC 2623 / CBS 732 / NBRC 1130 / NCYC 568 / NRRL Y-229).